The primary structure comprises 866 residues: Scm-like with four MBT domains protein 1 (866 aa).

MBT repeat units lie at residues Leu-20 to Pro-120, Ser-128 to Pro-232, Ala-242 to Pro-348, and Phe-356 to Pro-453. The tract at residues Val-34–Val-42 is antigenic epitope. The disordered stretch occupies residues Lys-641–Lys-777. A compositionally biased stretch (basic residues) spans Lys-663 to Ser-682. Positions Ser-683–Pro-694 are enriched in polar residues. Composition is skewed to acidic residues over residues Gly-699–Leu-713 and Gln-721–Glu-730. Residues Cys-737–Ser-749 show a composition bias toward low complexity. Phosphoserine occurs at positions 767 and 775. Residues Trp-796 to Phe-864 enclose the SAM domain.

As to quaternary structure, interacts with MYOD1. Component of the SLC (SFMBT1-LSD1-CoREST) corepressor complex, which also contains KDM1A/LSD1 and RCOR1/CoREST. Interacts with KDM1A/LSD1 and RCOR1/CoREST. Interacts with L3MBTL3. In terms of tissue distribution, expressed in all cell lines and normal tissues tested, including the thymus.

It is found in the nucleus. Histone-binding protein, which is part of various corepressor complexes. Mediates the recruitment of corepressor complexes to target genes, followed by chromatin compaction and repression of transcription. Plays a role during myogenesis: required for the maintenance of undifferentiated states of myogenic progenitor cells via interaction with MYOD1. Interaction with MYOD1 leads to the recruitment of associated corepressors and silencing of MYOD1 target genes. Part of the SLC complex in germ cells, where it may play a role during spermatogenesis. In Homo sapiens (Human), this protein is Scm-like with four MBT domains protein 1 (SFMBT1).